The chain runs to 166 residues: Co-chaperone protein HscB homolog (166 aa).

Residues 3 to 75 form the J domain; it reads QYFTLFRIEP…IDRAAYLLKT (73 aa).

The protein belongs to the HscB family. In terms of assembly, interacts with HscA and stimulates its ATPase activity.

In terms of biological role, co-chaperone involved in the maturation of iron-sulfur cluster-containing proteins. Seems to help targeting proteins to be folded toward HscA. The sequence is that of Co-chaperone protein HscB homolog from Neisseria meningitidis serogroup A / serotype 4A (strain DSM 15465 / Z2491).